Consider the following 922-residue polypeptide: Coronin-7 (922 aa).

WD repeat units follow at residues 75 to 115 (CHSD…EALP), 124 to 163 (PEELPVEVLQFHPTVDGVLVSTAGKTVKVWDVAKQQPLTE), 166 to 205 (AHKDLVQSAVWSRDGAIVGTACKDKQLRIFDPRARTQASQ), and 209 to 253 (AHEN…SALA). The interval 419–467 (DTDLSEGFSSPSSLMSPSTPSSLGPSLSSTSGIGTSPSQRSLQSLLGPS) is disordered. Low complexity predominate over residues 427–456 (SSPSSLMSPSTPSSLGPSLSSTSGIGTSPS). Phosphoserine is present on residues Ser459 and Ser462. Lys469 participates in a covalent cross-link: Glycyl lysine isopeptide (Lys-Gly) (interchain with G-Cter in ubiquitin). 4 WD repeats span residues 539–581 (QNGT…NVLT), 589–629 (GHTE…ERLK), 632–671 (GHQDQIFSLAWSPDGKQLATVCKDGHVRVYEPRSSPLPLQ), and 725–765 (DVAP…PFFL). Residues 858–922 (GMTPVSQAPR…FEGVDEDEWD (65 aa)) are disordered. Basic and acidic residues predominate over residues 881-893 (LEEKSDQQKKEEL). Position 912 is a phosphoserine (Ser912).

Belongs to the WD repeat coronin family. In terms of assembly, interacts with clathrin adapter AP1 complex. This interaction takes place at Golgi membranes and not AP1-positive endosomal membranes. Interacts (when ubiquitinated at Lys-469) with EPS15. Post-translationally, the membrane-associated form is phosphorylated on tyrosine residues. In terms of processing, ubiquitinated via 'Lys-33'-linked ubiquitin chains by the BCR(KLHL20) E3 ubiquitin ligase complex: 'Lys-33'-linked ubiquitination promotes interaction with EPS15 and facilitates actin polymerization at the trans-Golgi network, thereby facilitating post-Golgi trafficking. Deubiquitinated by ZRANB1/TRABID. In terms of tissue distribution, in the adult, widely expressed with highest levels in brain, thymus and kidney and low levels in skeletal and heart muscle. Not expressed in lung. In the eye, strongly expressed in the outer plexiform layer of the retina. In the intestine, expressed both in terminally differentiated epithelial cells and in crypt epithelium. In the embryo, strongest expression is seen in brain, thymus, intestine, apical epidermal layers of the skin and developing lens fibers of the eye.

Its subcellular location is the golgi apparatus membrane. It is found in the golgi apparatus. The protein resides in the trans-Golgi network. The protein localises to the cytoplasmic vesicle. It localises to the cytoplasm. Its subcellular location is the cytosol. Functionally, F-actin regulator involved in anterograde Golgi to endosome transport: upon ubiquitination via 'Lys-33'-linked ubiquitin chains by the BCR(KLHL20) E3 ubiquitin ligase complex, interacts with EPS15 and localizes to the trans-Golgi network, where it promotes actin polymerization, thereby facilitating post-Golgi trafficking. May play a role in the maintenance of the Golgi apparatus morphology. This chain is Coronin-7 (Coro7), found in Mus musculus (Mouse).